A 129-amino-acid chain; its full sequence is Tumor necrosis factor receptor superfamily member 12A (129 aa).

The signal sequence occupies residues 1–27 (MASAWPRSLPQILVLGFGLVLMRAAAG). Residues 28-80 (EQAPGTSPCSSGSSWSADLDKCMDCASCPARPHSDFCLGCAAAPPAHFRLLWP) lie on the Extracellular side of the membrane. 3 cysteine pairs are disulfide-bonded: Cys36/Cys49, Cys52/Cys67, and Cys55/Cys64. Residues 36-67 (CSSGSSWSADLDKCMDCASCPARPHSDFCLGC) form a TNFR-Cys; atypical repeat. Residues 81 to 101 (ILGGALSLVLVLALVSSFLVW) traverse the membrane as a helical segment. Residues 102–129 (RRCRRREKFTTPIEETGGEGCPGVALIQ) lie on the Cytoplasmic side of the membrane.

As to quaternary structure, associates with TRAF1 and TRAF2, and probably also with TRAF3. In terms of tissue distribution, highly expressed in fetal heart, intestine, kidney, liver, lung and skin, and in adult heart and ovary. Intermediate expression in adult kidney, lung and skin.

The protein resides in the membrane. Receptor for TNFSF12/TWEAK. Weak inducer of apoptosis in some cell types. Promotes angiogenesis and the proliferation of endothelial cells. May modulate cellular adhesion to matrix proteins. This chain is Tumor necrosis factor receptor superfamily member 12A (Tnfrsf12a), found in Mus musculus (Mouse).